The primary structure comprises 227 residues: Cytochrome c oxidase subunit 2 (227 aa).

At 1–14 (MAYPLQLGFQDATS) the chain is on the mitochondrial intermembrane side. The chain crosses the membrane as a helical span at residues 15-45 (PVMEELLHFHDHTLMIIFLISSLVLYIIMLM). The Mitochondrial matrix portion of the chain corresponds to 46–59 (LTTKLVHTNMMNVQ). A helical transmembrane segment spans residues 60-87 (EMEMIWTILPAIILILIALPSLHTLYMM). Topologically, residues 88 to 227 (DEINNPLLTI…YFESWSASLA (140 aa)) are mitochondrial intermembrane. Cu cation-binding residues include histidine 161, cysteine 196, glutamate 198, cysteine 200, histidine 204, and methionine 207. Residue glutamate 198 participates in Mg(2+) binding. Position 218 is a phosphotyrosine (tyrosine 218).

It belongs to the cytochrome c oxidase subunit 2 family. Component of the cytochrome c oxidase (complex IV, CIV), a multisubunit enzyme composed of 14 subunits. The complex is composed of a catalytic core of 3 subunits MT-CO1, MT-CO2 and MT-CO3, encoded in the mitochondrial DNA, and 11 supernumerary subunits COX4I, COX5A, COX5B, COX6A, COX6B, COX6C, COX7A, COX7B, COX7C, COX8 and NDUFA4, which are encoded in the nuclear genome. The complex exists as a monomer or a dimer and forms supercomplexes (SCs) in the inner mitochondrial membrane with NADH-ubiquinone oxidoreductase (complex I, CI) and ubiquinol-cytochrome c oxidoreductase (cytochrome b-c1 complex, complex III, CIII), resulting in different assemblies (supercomplex SCI(1)III(2)IV(1) and megacomplex MCI(2)III(2)IV(2)). Found in a complex with TMEM177, COA6, COX18, COX20, SCO1 and SCO2. Interacts with TMEM177 in a COX20-dependent manner. Interacts with COX20. Interacts with COX16. It depends on Cu cation as a cofactor.

The protein localises to the mitochondrion inner membrane. It carries out the reaction 4 Fe(II)-[cytochrome c] + O2 + 8 H(+)(in) = 4 Fe(III)-[cytochrome c] + 2 H2O + 4 H(+)(out). Functionally, component of the cytochrome c oxidase, the last enzyme in the mitochondrial electron transport chain which drives oxidative phosphorylation. The respiratory chain contains 3 multisubunit complexes succinate dehydrogenase (complex II, CII), ubiquinol-cytochrome c oxidoreductase (cytochrome b-c1 complex, complex III, CIII) and cytochrome c oxidase (complex IV, CIV), that cooperate to transfer electrons derived from NADH and succinate to molecular oxygen, creating an electrochemical gradient over the inner membrane that drives transmembrane transport and the ATP synthase. Cytochrome c oxidase is the component of the respiratory chain that catalyzes the reduction of oxygen to water. Electrons originating from reduced cytochrome c in the intermembrane space (IMS) are transferred via the dinuclear copper A center (CU(A)) of subunit 2 and heme A of subunit 1 to the active site in subunit 1, a binuclear center (BNC) formed by heme A3 and copper B (CU(B)). The BNC reduces molecular oxygen to 2 water molecules using 4 electrons from cytochrome c in the IMS and 4 protons from the mitochondrial matrix. The polypeptide is Cytochrome c oxidase subunit 2 (MT-CO2) (Mammuthus primigenius (Siberian woolly mammoth)).